A 20-amino-acid polypeptide reads, in one-letter code: Agglutinin beta-2 chain isoform 1 (20 aa).

The segment covering 1–10 has biased composition (polar residues); sequence TQSTGTSQTI. The interval 1–20 is disordered; sequence TQSTGTSQTIAVGLWGGPDN.

The protein belongs to the jacalin lectin family. Tetramer of four alpha chains associated with two or four beta chains.

Its function is as follows. Alpha-methyl-D-mannoside and D-mannose specific lectin. Binds IgA. The protein is Agglutinin beta-2 chain isoform 1 of Morus nigra (Black mulberry).